The primary structure comprises 152 residues: Transcriptional regulator MraZ (152 aa).

2 consecutive SpoVT-AbrB domains span residues 5–52 (ATLV…PLPE) and 81–124 (ASEC…DEQT).

This sequence belongs to the MraZ family. Forms oligomers.

It is found in the cytoplasm. The protein resides in the nucleoid. Its function is as follows. Negatively regulates its own expression and that of the subsequent genes in the proximal part of the division and cell wall (dcw) gene cluster. Acts by binding directly to DNA. May also regulate the expression of genes outside the dcw cluster. The sequence is that of Transcriptional regulator MraZ from Erwinia tasmaniensis (strain DSM 17950 / CFBP 7177 / CIP 109463 / NCPPB 4357 / Et1/99).